A 676-amino-acid polypeptide reads, in one-letter code: Heat shock cognate HSP70 protein (676 aa).

The segment at 613–676 (SARREGKDGW…RIEAINANTE (64 aa)) is disordered. The span at 630-646 (GSGDDNDGDDNSDEEDE) shows a compositional bias: acidic residues.

It belongs to the heat shock protein 70 family.

In Trypanosoma brucei brucei, this protein is Heat shock cognate HSP70 protein.